Reading from the N-terminus, the 63-residue chain is Cecropin-A1 (63 aa).

An N-terminal signal peptide occupies residues 1–23 (MKFYNIFVFVALILAITIGQSEA). Arg-62 bears the Arginine amide mark.

It belongs to the cecropin family.

It localises to the secreted. Its function is as follows. Cecropins have lytic and antibacterial activity against several Gram-positive and Gram-negative bacteria. The sequence is that of Cecropin-A1 (CecA1) from Drosophila mauritiana (Fruit fly).